The sequence spans 485 residues: G2/mitotic-specific cyclin-A1 (485 aa).

A disordered region spans residues 1–24 (MRSALSLKPSNGNAAKSQAVNNKN). A compositionally biased stretch (polar residues) spans 8–24 (KPSNGNAAKSQAVNNKN).

This sequence belongs to the cyclin family. Cyclin AB subfamily. Expressed in the cell lineages ABarp, C and E as well as the NSM neuroblasts.

Its function is as follows. Involved in the control of the cell cycle after S phase. May bind to and activate cdk-1 and/or cdk-2 to promote cell cycle progression. Necessary for embryogenesis. This Caenorhabditis elegans protein is G2/mitotic-specific cyclin-A1 (cya-1).